A 337-amino-acid chain; its full sequence is Dehydrogenase FUB6 (337 aa).

Belongs to the zinc-containing alcohol dehydrogenase family. Quinone oxidoreductase subfamily.

The protein operates within mycotoxin biosynthesis. Its function is as follows. Dehydrogenase; part of the gene cluster that mediates the biosynthesis of fusaric acid, a mycotoxin with low to moderate toxicity to animals and humans, but with high phytotoxic properties. L-aspartate is suggested as fusaric acid amino acid precursor that is activated and further processed to O-acetyl-L-homoserine by cluster enzymes aspartate kinase FUB3 and homoserine O-acetyltransferase FUB5, as well as enzymes of the primary metabolism. The polyketide synthase (PKS) FUB1 generates the triketide trans-2-hexenal which is presumptively released by the hydrolase FUB4 and linked to the NRPS-bound amino acid precursor by NAD(P)-dependent dehydrogenase FUB6. FUB1, FUB4, and the non-canonical NRPS Fub8 may form an enzyme complex. Further processing of the NRPS-bound intermediate might be carried out by FUB6 and the O-acetylhomoserine FUB7, enabling a spontaneous electrocyclization to close the carbon backbone of fusaric acid. Dihydrofusaric acid is likely to be released via reduction by the thioester reductase (TR) domain of FUB8 whereupon the final oxidation to fusaric acid may (also) be performed by the FMN-dependent dehydrogenase FUB9. The protein is Dehydrogenase FUB6 of Gibberella fujikuroi (strain CBS 195.34 / IMI 58289 / NRRL A-6831) (Bakanae and foot rot disease fungus).